Here is a 361-residue protein sequence, read N- to C-terminus: Phenylalanine--tRNA ligase alpha subunit (361 aa).

Glu-260 contacts Mg(2+).

Belongs to the class-II aminoacyl-tRNA synthetase family. Phe-tRNA synthetase alpha subunit type 1 subfamily. As to quaternary structure, tetramer of two alpha and two beta subunits. It depends on Mg(2+) as a cofactor.

It localises to the cytoplasm. The catalysed reaction is tRNA(Phe) + L-phenylalanine + ATP = L-phenylalanyl-tRNA(Phe) + AMP + diphosphate + H(+). The polypeptide is Phenylalanine--tRNA ligase alpha subunit (Chelativorans sp. (strain BNC1)).